Here is a 542-residue protein sequence, read N- to C-terminus: CTP synthase (542 aa).

Positions 1–265 (MTRYIFVTGG…DDFVVERFGL (265 aa)) are amidoligase domain. Serine 13 is a CTP binding site. A UTP-binding site is contributed by serine 13. ATP contacts are provided by residues 14–19 (SLGKGI) and aspartate 71. Mg(2+) is bound by residues aspartate 71 and glutamate 139. Residues 146-148 (DIE), 186-191 (KTKPTQ), and lysine 222 contribute to the CTP site. Residues 186–191 (KTKPTQ) and lysine 222 contribute to the UTP site. The Glutamine amidotransferase type-1 domain occupies 290–541 (TIAMVGKYME…VKAALAQKNK (252 aa)). Residue glycine 351 coordinates L-glutamine. Cysteine 378 serves as the catalytic Nucleophile; for glutamine hydrolysis. L-glutamine contacts are provided by residues 379 to 382 (LGMQ), glutamate 402, and arginine 469. Residues histidine 514 and glutamate 516 contribute to the active site.

It belongs to the CTP synthase family. Homotetramer.

The enzyme catalyses UTP + L-glutamine + ATP + H2O = CTP + L-glutamate + ADP + phosphate + 2 H(+). It catalyses the reaction L-glutamine + H2O = L-glutamate + NH4(+). The catalysed reaction is UTP + NH4(+) + ATP = CTP + ADP + phosphate + 2 H(+). It functions in the pathway pyrimidine metabolism; CTP biosynthesis via de novo pathway; CTP from UDP: step 2/2. Allosterically activated by GTP, when glutamine is the substrate; GTP has no effect on the reaction when ammonia is the substrate. The allosteric effector GTP functions by stabilizing the protein conformation that binds the tetrahedral intermediate(s) formed during glutamine hydrolysis. Inhibited by the product CTP, via allosteric rather than competitive inhibition. Its function is as follows. Catalyzes the ATP-dependent amination of UTP to CTP with either L-glutamine or ammonia as the source of nitrogen. Regulates intracellular CTP levels through interactions with the four ribonucleotide triphosphates. This is CTP synthase from Pseudomonas entomophila (strain L48).